Consider the following 307-residue polypeptide: Pseudouridine-5'-phosphate glycosidase (307 aa).

Glu28 serves as the catalytic Proton donor. Substrate is bound by residues Lys89 and Val109. Asp141 is a binding site for Mn(2+). Position 143–145 (Ser143–Asp145) interacts with substrate. Lys162 functions as the Nucleophile in the catalytic mechanism.

The protein belongs to the pseudouridine-5'-phosphate glycosidase family. In terms of assembly, homotrimer. Mn(2+) serves as cofactor.

It carries out the reaction D-ribose 5-phosphate + uracil = psi-UMP + H2O. Its function is as follows. Catalyzes the reversible cleavage of pseudouridine 5'-phosphate (PsiMP) to ribose 5-phosphate and uracil. Functions biologically in the cleavage direction, as part of a pseudouridine degradation pathway. The chain is Pseudouridine-5'-phosphate glycosidase from Staphylococcus aureus (strain MW2).